The primary structure comprises 251 residues: Ribonuclease PH (251 aa).

Residues Arg-90 and 128–130 (GTR) each bind phosphate.

It belongs to the RNase PH family. In terms of assembly, homohexameric ring arranged as a trimer of dimers.

It carries out the reaction tRNA(n+1) + phosphate = tRNA(n) + a ribonucleoside 5'-diphosphate. Functionally, phosphorolytic 3'-5' exoribonuclease that plays an important role in tRNA 3'-end maturation. Removes nucleotide residues following the 3'-CCA terminus of tRNAs; can also add nucleotides to the ends of RNA molecules by using nucleoside diphosphates as substrates, but this may not be physiologically important. Probably plays a role in initiation of 16S rRNA degradation (leading to ribosome degradation) during starvation. The polypeptide is Ribonuclease PH (Leifsonia xyli subsp. xyli (strain CTCB07)).